Consider the following 152-residue polypeptide: Nucleoside diphosphate kinase B (152 aa).

The tract at residues Met1–Lys66 is interaction with AKAP13. 6 residues coordinate ATP: Lys12, Phe60, Arg88, Thr94, Arg105, and Asn115. The Pros-phosphohistidine intermediate role is filled by His118.

Belongs to the NDK family. As to quaternary structure, hexamer of two different chains: An and B (A6, A5B, A4B2, A3B3, A2B4, AB5, B6). Interacts with CAPN8. Interacts with AKAP13. Interacts with ITGB1BP1 (via C-terminal domain region). Interacts with BCL2L10. The cofactor is Mg(2+). As to expression, ubiquitous.

The protein resides in the cytoplasm. The protein localises to the cell projection. It is found in the lamellipodium. Its subcellular location is the ruffle. It localises to the nucleus. It catalyses the reaction a 2'-deoxyribonucleoside 5'-diphosphate + ATP = a 2'-deoxyribonucleoside 5'-triphosphate + ADP. The catalysed reaction is a ribonucleoside 5'-diphosphate + ATP = a ribonucleoside 5'-triphosphate + ADP. It carries out the reaction ATP + protein L-histidine = ADP + protein N-phospho-L-histidine.. In terms of biological role, major role in the synthesis of nucleoside triphosphates other than ATP. The ATP gamma phosphate is transferred to the NDP beta phosphate via a ping-pong mechanism, using a phosphorylated active-site intermediate. Negatively regulates Rho activity by interacting with AKAP13/LBC. Acts as a transcriptional activator of the MYC gene; binds DNA non-specifically. Binds to both single-stranded guanine- and cytosine-rich strands within the nuclease hypersensitive element (NHE) III(1) region of the MYC gene promoter. Does not bind to duplex NHE III(1). Has G-quadruplex (G4) DNA-binding activity, which is independent of its nucleotide-binding and kinase activity. Binds both folded and unfolded G4 with similar low nanomolar affinities. Stabilizes folded G4s regardless of whether they are prefolded or not. Exhibits histidine protein kinase activity. In Canis lupus familiaris (Dog), this protein is Nucleoside diphosphate kinase B (NME2).